We begin with the raw amino-acid sequence, 297 residues long: Phosphatidylinositol N-acetylglucosaminyltransferase subunit C (297 aa).

4 helical membrane passes run 67-87 (VFVV…WLFG), 88-108 (TGLA…GGDG), 153-173 (AVFM…AAIV), and 239-259 (AFGG…LLLF).

This sequence belongs to the PIGC family. As to quaternary structure, component of the glycosylphosphatidylinositol-N-acetylglucosaminyltransferase (GPI-GnT) complex composed at least by PIGA, PIGC, PIGH, PIGP, PIGQ, PIGY and DPM2. Interacts with PIGQ. Interacts with the heterodimer PIGA:PIGH.

It localises to the endoplasmic reticulum membrane. It functions in the pathway glycolipid biosynthesis; glycosylphosphatidylinositol-anchor biosynthesis. Part of the glycosylphosphatidylinositol-N-acetylglucosaminyltransferase (GPI-GnT) complex that catalyzes the transfer of N-acetylglucosamine from UDP-N-acetylglucosamine to phosphatidylinositol and participates in the first step of GPI biosynthesis. In Mus musculus (Mouse), this protein is Phosphatidylinositol N-acetylglucosaminyltransferase subunit C.